The sequence spans 447 residues: N-succinylarginine dihydrolase (447 aa).

Substrate-binding positions include 19 to 28, Asn110, and 137 to 138; these read AGLSFGNEAS and HR. Glu174 is a catalytic residue. Residue Arg212 participates in substrate binding. His248 is a catalytic residue. Asp250 and Asn359 together coordinate substrate. Residue Cys365 is the Nucleophile of the active site.

This sequence belongs to the succinylarginine dihydrolase family. As to quaternary structure, homodimer.

The enzyme catalyses N(2)-succinyl-L-arginine + 2 H2O + 2 H(+) = N(2)-succinyl-L-ornithine + 2 NH4(+) + CO2. The protein operates within amino-acid degradation; L-arginine degradation via AST pathway; L-glutamate and succinate from L-arginine: step 2/5. In terms of biological role, catalyzes the hydrolysis of N(2)-succinylarginine into N(2)-succinylornithine, ammonia and CO(2). In Escherichia coli O81 (strain ED1a), this protein is N-succinylarginine dihydrolase.